Here is a 122-residue protein sequence, read N- to C-terminus: Large ribosomal subunit protein uL14 (122 aa).

This sequence belongs to the universal ribosomal protein uL14 family. In terms of assembly, part of the 50S ribosomal subunit. Forms a cluster with proteins L3 and L19. In the 70S ribosome, L14 and L19 interact and together make contacts with the 16S rRNA in bridges B5 and B8.

Binds to 23S rRNA. Forms part of two intersubunit bridges in the 70S ribosome. The sequence is that of Large ribosomal subunit protein uL14 from Nitratidesulfovibrio vulgaris (strain ATCC 29579 / DSM 644 / CCUG 34227 / NCIMB 8303 / VKM B-1760 / Hildenborough) (Desulfovibrio vulgaris).